The primary structure comprises 843 residues: Protein translocase subunit SecA (843 aa).

ATP-binding positions include glutamine 85, 103–107 (GEGKT), and aspartate 490. Positions 799 to 834 (KNAVENRSDDSLPKQPVKAEPRVGRNDPCPCGSGKK) are disordered. Basic and acidic residues predominate over residues 802-823 (VENRSDDSLPKQPVKAEPRVGR). Residues cysteine 827, cysteine 829, cysteine 838, and cysteine 839 each contribute to the Zn(2+) site.

It belongs to the SecA family. As to quaternary structure, monomer and homodimer. Part of the essential Sec protein translocation apparatus which comprises SecA, SecYEG and auxiliary proteins SecDF. Other proteins may also be involved. Zn(2+) is required as a cofactor.

Its subcellular location is the cell membrane. It localises to the cytoplasm. The enzyme catalyses ATP + H2O + cellular proteinSide 1 = ADP + phosphate + cellular proteinSide 2.. In terms of biological role, part of the Sec protein translocase complex. Interacts with the SecYEG preprotein conducting channel. Has a central role in coupling the hydrolysis of ATP to the transfer of proteins into and across the cell membrane, serving as an ATP-driven molecular motor driving the stepwise translocation of polypeptide chains across the membrane. In Heliobacterium modesticaldum (strain ATCC 51547 / Ice1), this protein is Protein translocase subunit SecA.